The chain runs to 316 residues: Ribosomal RNA small subunit methyltransferase H (316 aa).

S-adenosyl-L-methionine contacts are provided by residues 35 to 37 (SGH), Asp55, Phe84, Asp105, and Gln112.

Belongs to the methyltransferase superfamily. RsmH family.

It localises to the cytoplasm. The catalysed reaction is cytidine(1402) in 16S rRNA + S-adenosyl-L-methionine = N(4)-methylcytidine(1402) in 16S rRNA + S-adenosyl-L-homocysteine + H(+). In terms of biological role, specifically methylates the N4 position of cytidine in position 1402 (C1402) of 16S rRNA. The sequence is that of Ribosomal RNA small subunit methyltransferase H from Streptococcus equi subsp. zooepidemicus (strain H70).